The sequence spans 354 residues: MNELKNDRYLRALLRQPVDVTPVWMMRQAGRYLPEYKATRAQAGDFMSLCKNAELACEVTLQPLRRFPLDAAILFSDILTIPDAMGLGLYFETGEGPRFSSPITSRADVDKLPAFDPEVELGYVMNAVRTIRRELKGEVPLIGFSGSPWTLATYMVEGGSSKAFTKLKKMMYAEPATLHLLLDKLADSVILYLNAQIKAGAQSVMVFDTWGGVLTGRDYREFSLHYMHKIVDGLLRENDGRRVPVTLFTKGGGQWLEAMAATGCDALGLDWTTDIADARRRVGDKVALQGNMDPSMLYASPERIGQEVETILAGFGHGEGHVFNLGHGIHPDVPPENAGAFVEAVHAQSGKYHR.

Residues 27–31, D77, Y154, T209, and H327 contribute to the substrate site; that span reads RQAGR.

Belongs to the uroporphyrinogen decarboxylase family. Homodimer.

It localises to the cytoplasm. It carries out the reaction uroporphyrinogen III + 4 H(+) = coproporphyrinogen III + 4 CO2. It participates in porphyrin-containing compound metabolism; protoporphyrin-IX biosynthesis; coproporphyrinogen-III from 5-aminolevulinate: step 4/4. Functionally, catalyzes the decarboxylation of four acetate groups of uroporphyrinogen-III to yield coproporphyrinogen-III. The polypeptide is Uroporphyrinogen decarboxylase (Serratia proteamaculans (strain 568)).